Consider the following 309-residue polypeptide: Heme A synthase (309 aa).

Residues 1–6 are Cytoplasmic-facing; it reads MTKKLK. A helical membrane pass occupies residues 7 to 27; it reads ILSVISTICMIPLLLGGALVT. At 28-62 the chain is on the extracellular side; the sequence is KTGSADGCGNSWPLCEGQFLPTKISFEMFIELSHR. Cys35 and Cys42 are joined by a disulfide. The active site involves Glu58. Residue His61 participates in heme o binding. A helical membrane pass occupies residues 63 to 83; it reads GVTGVVGILIVYLTYLVWKEL. Topologically, residues 84-88 are cytoplasmic; the sequence is RHNKE. Residues 89–109 form a helical membrane-spanning segment; that stretch reads VVFLAFSALSLMILQALIGAA. Residues 110 to 123 lie on the Extracellular side of the membrane; the sequence is AVVWGQSDFALATH. His123 is a binding site for heme o. A helical membrane pass occupies residues 124-144; the sequence is FGISLVCFAAVFLLMLQLFEI. Over 145–159 the chain is Cytoplasmic; sequence DKKLHTEDIHINKTH. The chain crosses the membrane as a helical span at residues 160-180; the sequence is RIEIYAISFYTMCVVYSGALV. Over 181 to 211 the chain is Extracellular; sequence RHTDSNLACRDWPLCVNNSSFGISDYNFYQW. A disulfide bridge links Cys189 with Cys195. Residues 212-232 form a helical membrane-spanning segment; the sequence is VQMGHRLAAGILFIWTVILTI. His216 is a binding site for heme b. The Cytoplasmic portion of the chain corresponds to 233-247; that stretch reads RMVKHYKNSKVFYWS. The helical transmembrane segment at 248-268 threads the bilayer; that stretch reads WLITLGLITLQVLFGALIIFT. The Extracellular portion of the chain corresponds to 269–271; sequence SLN. A helical membrane pass occupies residues 272–292; the sequence is LAIALFHALFITCYFGMLSFF. Residue His278 coordinates heme b. Topologically, residues 293-309 are cytoplasmic; the sequence is MHLSFRAKRREKYSNQS.

The protein belongs to the COX15/CtaA family. Type 1 subfamily. As to quaternary structure, interacts with CtaB. Heme b is required as a cofactor.

It localises to the cell membrane. The enzyme catalyses Fe(II)-heme o + 2 A + H2O = Fe(II)-heme a + 2 AH2. Its pathway is porphyrin-containing compound metabolism; heme A biosynthesis; heme A from heme O: step 1/1. Catalyzes the conversion of heme O to heme A by two successive hydroxylations of the methyl group at C8. The first hydroxylation forms heme I, the second hydroxylation results in an unstable dihydroxymethyl group, which spontaneously dehydrates, resulting in the formyl group of heme A. This is Heme A synthase from Oceanobacillus iheyensis (strain DSM 14371 / CIP 107618 / JCM 11309 / KCTC 3954 / HTE831).